A 544-amino-acid chain; its full sequence is Probable protein kinase UbiB (544 aa).

The region spanning 123–505 (EFDEQALASA…GRQKSHNVRS (383 aa)) is the Protein kinase domain. Residues 129-137 (LASASIAQV) and Lys-156 each bind ATP. Residue Asp-291 is the Proton acceptor of the active site. Residues 522 to 540 (LPLWLSCGTLVTVLLVLLL) traverse the membrane as a helical segment.

It belongs to the ABC1 family. UbiB subfamily.

It localises to the cell inner membrane. It participates in cofactor biosynthesis; ubiquinone biosynthesis [regulation]. Its function is as follows. Is probably a protein kinase regulator of UbiI activity which is involved in aerobic coenzyme Q (ubiquinone) biosynthesis. This chain is Probable protein kinase UbiB, found in Actinobacillus pleuropneumoniae serotype 5b (strain L20).